We begin with the raw amino-acid sequence, 303 residues long: Acetaldehyde dehydrogenase 1 (303 aa).

The Acyl-thioester intermediate role is filled by Cys130. Residues 161-169 and Asn272 contribute to the NAD(+) site; that span reads SVGPGTRKN.

This sequence belongs to the acetaldehyde dehydrogenase family.

It catalyses the reaction acetaldehyde + NAD(+) + CoA = acetyl-CoA + NADH + H(+). In Methylibium petroleiphilum (strain ATCC BAA-1232 / LMG 22953 / PM1), this protein is Acetaldehyde dehydrogenase 1.